The primary structure comprises 995 residues: Putative pentatricopeptide repeat-containing protein At5g09950 (995 aa).

22 PPR repeats span residues 35-65 (DVYL…MPLR), 66-100 (NCVS…GIFS), 101-137 (NQYA…SYAV), 138-169 (DAVV…IEVK), 170-204 (NSVS…GSRP), 205-241 (TEYT…GLLT), 242-276 (DLFV…NAVT), 278-303 (NGLM…MNSM), 307-342 (SPES…VITT), 348-378 (MVGI…MTDK), 379-413 (DSVS…DILP), 414-448 (GSFT…GIDL), 449-483 (NVSV…DQVS), 484-515 (WNSI…GQKL), 516-550 (NRIT…NIAD), 551-581 (EATT…MAER), 583-617 (DNVT…GQRL), 618-652 (DSFM…CLES), 653-683 (DVVV…MPVR), 684-718 (NSYS…GQTP), 720-750 (DHVT…MSDS), and 756-786 (RIEH…MPMK). The segment at 791–868 (IWRTVLGACC…EAGYSWVTMK (78 aa)) is type E motif. The interval 869–899 (DGVHMFVAGDKSHPDADVIYKKLKELNRKMR) is type E(+) motif. Positions 900 to 995 (DAGYVPQTGF…DGACSCSDFW (96 aa)) are type DYW motif.

The protein belongs to the PPR family. PCMP-H subfamily.

The protein is Putative pentatricopeptide repeat-containing protein At5g09950 (PCMP-H35) of Arabidopsis thaliana (Mouse-ear cress).